A 780-amino-acid chain; its full sequence is Striatin (780 aa).

The stretch at 53–120 (LHFLQHEWAR…QERAKYHKLK (68 aa)) forms a coiled coil. Positions 55–63 (FLQHEWARF) are caveolin-binding. Residues 124–145 (ELNQGDMKPPSYDSDEGNETEV) are disordered. The residue at position 137 (S137) is a Phosphoserine. The segment at 149-166 (QNSQFMWKQGRQLLRQYL) is calmodulin-binding. T225 carries the post-translational modification Phosphothreonine. Phosphoserine is present on residues S227, S229, S245, and S259. 3 disordered regions span residues 290 to 321 (FLVASEEGDNESRSAGDGTDWEKEDQCLTPER), 334 to 353 (EQYKKERKGKKGVKRPNRSK), and 363 to 388 (DVDELPSLQPSVGSPSRPSSSRLPEQ). The span at 299–315 (NESRSAGDGTDWEKEDQ) shows a compositional bias: basic and acidic residues. Positions 338-351 (KERKGKKGVKRPNR) are enriched in basic residues. WD repeat units lie at residues 461 to 500 (SHFDGIRALAFHPIEPVLITASEDHTLKMWNLQKTAPAKK), 514 to 553 (AHKGPVLCVVMSSNGEQCYSGGTDGLIQSWSTTNPNVDPY), 567 to 606 (GHTDAVWGLAYSAAHQRLLSCSADGTLRLWTTTEVAPALT), 662 to 701 (SSSCQINRVISHPTLPISITAHEDRHIKFYDNNTGKLIHS), 704 to 743 (AHLEAVTSLAVDPNGLYLMSGSHDCSIRLWNLESKTCIQE), and 750 to 780 (KFEESIHDVAFHPSKCYIASAGADALAKVFV).

The protein belongs to the WD repeat striatin family. As to quaternary structure, part of the core of STRIPAK complexes composed of PP2A catalytic and scaffolding subunits, the striatins (PP2A regulatory subunits), the striatin-associated proteins MOB4, STRIP1 and STRIP2, PDCD10 and members of the STE20 kinases, such as STK24 and STK26. Interacts with CTTNBP2; this interaction may regulate dendritic spine distribution of STRN. Activation of glutamate receptors weakens the interaction with CTTNBP2. In terms of tissue distribution, mainly expressed in the central nervous system. Mostly confined in dendrites, not in axons, and is most abundant in dendritic spines.

Its subcellular location is the cytoplasm. The protein resides in the membrane. The protein localises to the cell projection. It localises to the dendritic spine. Calmodulin-binding scaffolding protein which is the center of the striatin-interacting phosphatase and kinase (STRIPAK) complexes. STRIPAK complexes have critical roles in protein (de)phosphorylation and are regulators of multiple signaling pathways including Hippo, MAPK, nuclear receptor and cytoskeleton remodeling. Different types of STRIPAK complexes are involved in a variety of biological processes such as cell growth, differentiation, apoptosis, metabolism and immune regulation. The polypeptide is Striatin (Strn) (Rattus norvegicus (Rat)).